Reading from the N-terminus, the 228-residue chain is Flagellar L-ring protein (228 aa).

The signal sequence occupies residues 1 to 17 (MHYLRYFAIAFLLLLSS). Cys-18 carries the N-palmitoyl cysteine lipid modification. Residue Cys-18 is the site of S-diacylglycerol cysteine attachment.

It belongs to the FlgH family. The basal body constitutes a major portion of the flagellar organelle and consists of four rings (L,P,S, and M) mounted on a central rod.

Its subcellular location is the cell membrane. The protein resides in the bacterial flagellum basal body. In terms of biological role, assembles around the rod to form the L-ring and probably protects the motor/basal body from shearing forces during rotation. This chain is Flagellar L-ring protein, found in Wigglesworthia glossinidia brevipalpis.